A 309-amino-acid polypeptide reads, in one-letter code: tRNA uridine(34) hydroxylase (309 aa).

The 96-residue stretch at 130–225 (RGEEVVFFDG…YGEKYGNDGL (96 aa)) folds into the Rhodanese domain. The Cysteine persulfide intermediate role is filled by Cys-185.

It belongs to the TrhO family.

The catalysed reaction is uridine(34) in tRNA + AH2 + O2 = 5-hydroxyuridine(34) in tRNA + A + H2O. Its function is as follows. Catalyzes oxygen-dependent 5-hydroxyuridine (ho5U) modification at position 34 in tRNAs. This Corynebacterium aurimucosum (strain ATCC 700975 / DSM 44827 / CIP 107346 / CN-1) (Corynebacterium nigricans) protein is tRNA uridine(34) hydroxylase.